The sequence spans 147 residues: Receptor activity-modifying protein 3 (147 aa).

An N-terminal signal peptide occupies residues 1–22; that stretch reads MKTPAQRLHLLPLLLLLCGECA. Topologically, residues 23 to 112 are extracellular; sequence QVCGCNETGM…CTVDRTHWED (90 aa). 4 N-linked (GlcNAc...) asparagine glycosylation sites follow: asparagine 28, asparagine 57, asparagine 70, and asparagine 102. 2 disulfide bridges follow: cysteine 39-cysteine 71 and cysteine 56-cysteine 103. The helical transmembrane segment at 113–137 threads the bilayer; that stretch reads PPDEVLIPLIAVPVVLTVAMAGLVV. Over 138–147 the chain is Cytoplasmic; it reads WRSKHTDRLL.

This sequence belongs to the RAMP family. As to quaternary structure, heterodimer of CALCRL and RAMP3; interaction induces allosteric modulation of CALCRL function and ligand specificity for adrenomedullin/ADM and intermedin/ADM2. Heterodimer of CALCR and RAMP3; interaction form the receptor complex AMYR3 for amylin/IAPP. Interacts with GPER1. As to expression, expressed predominantly in the testis, embryonic and adult brain and in kidney.

Its subcellular location is the cell membrane. It is found in the membrane. Its function is as follows. Accessory protein that interacts with and modulates the function of G-protein coupled receptors including calcitonin gene-related peptide type 1 receptor (CALCRL), calcitonin receptor (CALCR) and G-protein coupled estrogen receptor 1 (GPER1). Required for the transport of CALCRL and GPER1 receptors to the plasma membrane. Plays a role in cardioprotection by reducing cardiac hypertrophy and perivascular fibrosis in a GPER1-dependent manner. Together with CALCRL, form a receptor complex for adrenomedullin/ADM and intermedin/ADM2. Together with CALCR, act as a receptor complex for amylin/IAPP. This Mus musculus (Mouse) protein is Receptor activity-modifying protein 3.